A 64-amino-acid chain; its full sequence is MKKHEIASLSEDELKKQLVELKQRFADIRFNKIVEPPQNPMIFKNLRRDIARMKTALHRYQTQK.

This sequence belongs to the universal ribosomal protein uL29 family.

The protein is Large ribosomal subunit protein uL29 of Chloroherpeton thalassium (strain ATCC 35110 / GB-78).